The primary structure comprises 391 residues: MSGPVPSRVRVYTDVNTHRPREYWDYESHVVEWGNQDDYQLVRKLGRGKYSEVFEAINITNNEKVVVKILKPVKKKKIKREIKILENLRGGPNIITLADIVKDPASRTPALAFEHVNNTDFKQLYQTLTDYDIRFYMYEILKALDYCHSMGIMHRDVKPHNVMIDHEHRKLRLIDWGLAEFYHPGQEYNVRVASRYFKGPELLVDYQMYDYSLDMWSLGCMLASMIFRKEPFFHGHDNYDQLVRIAKVLGTEDLYDYIDKYNIELDPRFNDILGRHSRKRWERFVHSENQHLVSPEALDFLDKLLRYDHQSRLTAREAMEHPYFYTVVKDQARMGSSSMPGGSTPVSSANMMSGISSVPTPSPLGPLAGSPVIAAANPLGMPVPAAAGAQQ.

Residues 36–41 form an interaction with beta subunit region; the sequence is QDDYQL. The Protein kinase domain maps to 39 to 324; that stretch reads YQLVRKLGRG…AREAMEHPYF (286 aa). Residues 45–53 and Lys68 each bind ATP; that span reads LGRGKYSEV. Asp156 functions as the Proton acceptor in the catalytic mechanism. Thr344 and Thr360 each carry phosphothreonine; by CDK1. Ser362 and Ser370 each carry phosphoserine; by CDK1.

The protein belongs to the protein kinase superfamily. Ser/Thr protein kinase family. CK2 subfamily. As to quaternary structure, heterotetramer composed of two catalytic subunits (alpha chain and/or alpha' chain) and two regulatory subunits (beta chains). The tetramer can exist as a combination of 2 alpha/2 beta, 2 alpha'/2 beta or 1 alpha/1 alpha'/2 beta subunits. Also part of a CK2-SPT16-SSRP1 complex composed of SSRP1, SUPT16H, CSNK2A1, CSNK2A2 and CSNK2B, which forms following UV irradiation. Interacts with RNPS1. Interacts with SNAI1. Interacts with PML. Interacts with CCAR2. Interacts with HIRIP3. In terms of processing, phosphorylated at Thr-344, Thr-360, Ser-362 and Ser-370 by CDK1 in prophase and metaphase and dephosphorylated during anaphase. Phosphorylation does not directly affect casein kinase 2 activity, but may contribute to its regulation by forming binding sites for interacting proteins and/or targeting it to different compartments.

The protein localises to the nucleus. It catalyses the reaction L-seryl-[protein] + ATP = O-phospho-L-seryl-[protein] + ADP + H(+). The enzyme catalyses L-threonyl-[protein] + ATP = O-phospho-L-threonyl-[protein] + ADP + H(+). Constitutively active protein kinase whose activity is not directly affected by phosphorylation. Seems to be regulated by level of expression and localization. Functionally, catalytic subunit of a constitutively active serine/threonine-protein kinase complex that phosphorylates a large number of substrates containing acidic residues C-terminal to the phosphorylated serine or threonine. Regulates numerous cellular processes, such as cell cycle progression, apoptosis and transcription, as well as viral infection. May act as a regulatory node which integrates and coordinates numerous signals leading to an appropriate cellular response. During mitosis, functions as a component of the p53/TP53-dependent spindle assembly checkpoint (SAC) that maintains cyclin-B-CDK1 activity and G2 arrest in response to spindle damage. Also required for p53/TP53-mediated apoptosis, phosphorylating 'Ser-392' of p53/TP53 following UV irradiation. Phosphorylates a number of DNA repair proteins in response to DNA damage, such as MDC1, MRE11, RAD9A, RAD51 and HTATSF1, promoting their recruitment to DNA damage sites. Can also negatively regulate apoptosis. Phosphorylates the caspases CASP9 and CASP2 and the apoptotic regulator NOL3. Phosphorylation protects CASP9 from cleavage and activation by CASP8, and inhibits the dimerization of CASP2 and activation of CASP8. Phosphorylates YY1, protecting YY1 from cleavage by CASP7 during apoptosis. Regulates transcription by direct phosphorylation of RNA polymerases I, II, III and IV. Also phosphorylates and regulates numerous transcription factors including NF-kappa-B, STAT1, CREB1, IRF1, IRF2, ATF1, ATF4, SRF, MAX, JUN, FOS, MYC and MYB. Phosphorylates Hsp90 and its co-chaperones FKBP4 and CDC37, which is essential for chaperone function. Mediates sequential phosphorylation of FNIP1, promoting its gradual interaction with Hsp90, leading to activate both kinase and non-kinase client proteins of Hsp90. Regulates Wnt signaling by phosphorylating CTNNB1 and the transcription factor LEF1. Acts as an ectokinase that phosphorylates several extracellular proteins. Phosphorylates PML at 'Ser-565' and primes it for ubiquitin-mediated degradation. Plays an important role in the circadian clock function by phosphorylating BMAL1 at 'Ser-90' which is pivotal for its interaction with CLOCK and which controls CLOCK nuclear entry. Phosphorylates FMR1, promoting FMR1-dependent formation of a membraneless compartment. May phosphorylate histone H2A on 'Ser-1'. In Oryctolagus cuniculus (Rabbit), this protein is Casein kinase II subunit alpha (CSNK2A1).